The sequence spans 428 residues: 3-phosphoshikimate 1-carboxyvinyltransferase (428 aa).

3-phosphoshikimate-binding residues include lysine 23, serine 24, and arginine 28. Lysine 23 is a phosphoenolpyruvate binding site. Glycine 97 and arginine 125 together coordinate phosphoenolpyruvate. The 3-phosphoshikimate site is built by serine 170, serine 171, glutamine 172, serine 198, aspartate 314, asparagine 337, and lysine 341. Glutamine 172 lines the phosphoenolpyruvate pocket. Aspartate 314 serves as the catalytic Proton acceptor. Residues arginine 345, arginine 387, and lysine 412 each contribute to the phosphoenolpyruvate site.

The protein belongs to the EPSP synthase family. In terms of assembly, monomer.

Its subcellular location is the cytoplasm. It catalyses the reaction 3-phosphoshikimate + phosphoenolpyruvate = 5-O-(1-carboxyvinyl)-3-phosphoshikimate + phosphate. It participates in metabolic intermediate biosynthesis; chorismate biosynthesis; chorismate from D-erythrose 4-phosphate and phosphoenolpyruvate: step 6/7. Its function is as follows. Catalyzes the transfer of the enolpyruvyl moiety of phosphoenolpyruvate (PEP) to the 5-hydroxyl of shikimate-3-phosphate (S3P) to produce enolpyruvyl shikimate-3-phosphate and inorganic phosphate. This is 3-phosphoshikimate 1-carboxyvinyltransferase from Edwardsiella ictaluri (strain 93-146).